The following is a 268-amino-acid chain: Thymidylate synthase (268 aa).

Arg27 serves as a coordination point for dUMP. (6R)-5,10-methylene-5,6,7,8-tetrahydrofolate is bound at residue His57. Position 132–133 (Arg132–Arg133) interacts with dUMP. Cys152 serves as the catalytic Nucleophile. Residues Arg172–Asp175, Asn183, and His213–Tyr215 contribute to the dUMP site. A (6R)-5,10-methylene-5,6,7,8-tetrahydrofolate-binding site is contributed by Asp175. Ala267 is a (6R)-5,10-methylene-5,6,7,8-tetrahydrofolate binding site.

The protein belongs to the thymidylate synthase family. Bacterial-type ThyA subfamily. As to quaternary structure, homodimer.

The protein localises to the cytoplasm. The enzyme catalyses dUMP + (6R)-5,10-methylene-5,6,7,8-tetrahydrofolate = 7,8-dihydrofolate + dTMP. Its pathway is pyrimidine metabolism; dTTP biosynthesis. Catalyzes the reductive methylation of 2'-deoxyuridine-5'-monophosphate (dUMP) to 2'-deoxythymidine-5'-monophosphate (dTMP) while utilizing 5,10-methylenetetrahydrofolate (mTHF) as the methyl donor and reductant in the reaction, yielding dihydrofolate (DHF) as a by-product. This enzymatic reaction provides an intracellular de novo source of dTMP, an essential precursor for DNA biosynthesis. The polypeptide is Thymidylate synthase (Kineococcus radiotolerans (strain ATCC BAA-149 / DSM 14245 / SRS30216)).